We begin with the raw amino-acid sequence, 112 residues long: MKKVEAIIRPEKLEIVKKALSDAGYVGMTVSEVKGRGVQGGIVERYRGREYIVDLIPKVKIELVVKEEDVDNVIDIICENARTGNPGDGKIFVIPVERVVRVRTKEEGRDVL.

ADP is bound by residues Thr29, 37-39 (GVQ), Val64, and 87-90 (GDGK). ATP contacts are provided by residues Thr29, 37–39 (GVQ), Val64, and 87–90 (GDGK).

This sequence belongs to the P(II) protein family. In terms of assembly, homotrimer. Interacts and forms a complex with Amt2.

It is found in the cytoplasm. Involved in the regulation of nitrogen metabolism. Regulates the activity of its targets by protein-protein interaction in response to the nitrogen status of the cell. Regulates the activity of the ammonia channel Amt2 via direct interaction. The chain is Nitrogen regulatory protein GlnK2 from Methanocaldococcus jannaschii (strain ATCC 43067 / DSM 2661 / JAL-1 / JCM 10045 / NBRC 100440) (Methanococcus jannaschii).